Consider the following 244-residue polypeptide: Probable transcriptional regulatory protein XF_1906 (244 aa).

The protein belongs to the TACO1 family.

It is found in the cytoplasm. This is Probable transcriptional regulatory protein XF_1906 from Xylella fastidiosa (strain 9a5c).